The chain runs to 89 residues: Large ribosomal subunit protein bL27 (89 aa).

The disordered stretch occupies residues 1-21; sequence MAHKKAGGSSRNGRDSKGKRL.

This sequence belongs to the bacterial ribosomal protein bL27 family.

This Bradyrhizobium diazoefficiens (strain JCM 10833 / BCRC 13528 / IAM 13628 / NBRC 14792 / USDA 110) protein is Large ribosomal subunit protein bL27.